The chain runs to 475 residues: Protein FIZZY-RELATED 1 (475 aa).

Positions 1-27 (MEEDESTTPKKKSDSQLNLPPSMNRPT) are disordered. Residues 15–27 (SQLNLPPSMNRPT) show a composition bias toward polar residues. WD repeat units follow at residues 166-203 (QDDFYLNLVDWSAQNVLAVGLGNCVYLWNACSSKVTKL), 207-246 (GVDETVCSVGWALRGTHLAIGTSSGTVQIWDVLRCKNIRT), 249-289 (GHRL…SKLK), 290-329 (GHKSEICGLKWSSDNRELASGGNDNKLFVWNQHSTQPVLR), 332-374 (EHAA…HLNC), 376-417 (DTNS…KLAT), and 420-459 (GHSYRVLYLAVSPDGQTIVTGAGDETLRFWNVFPSPKSQS).

It belongs to the WD repeat CDC20/Fizzy family. As to quaternary structure, associates with the APC/C complex. Interacts with CDC20-1, CDC20-2, CYCA1-1, CYCA1-2, CYCA3-4, CYCB1-1 and CYCB1-2. Binds to GIG1. As to expression, expressed in the root tip, predominantly in the root cap, quiescent center cells, surrounding stem cells and columella.

The protein resides in the nucleus. It participates in protein modification; protein ubiquitination. Its function is as follows. Activator protein that regulates the ubiquitin ligase activity and substrate specificity of the anaphase promoting complex/cyclosome (APC/C). Required for meristem organization and maintenance of quiescent center identity and stem cells. The sequence is that of Protein FIZZY-RELATED 1 (FZR1) from Arabidopsis thaliana (Mouse-ear cress).